The chain runs to 140 residues: Small ribosomal subunit protein uS12 (140 aa).

Disordered stretches follow at residues 36–56 (TYNP…MTPK) and 117–140 (TSGV…EKKE).

This sequence belongs to the universal ribosomal protein uS12 family. As to quaternary structure, part of the 30S ribosomal subunit. Contacts proteins S8 and S17. May interact with IF1 in the 30S initiation complex.

In terms of biological role, with S4 and S5 plays an important role in translational accuracy. Functionally, interacts with and stabilizes bases of the 16S rRNA that are involved in tRNA selection in the A site and with the mRNA backbone. Located at the interface of the 30S and 50S subunits, it traverses the body of the 30S subunit contacting proteins on the other side and probably holding the rRNA structure together. The combined cluster of proteins S8, S12 and S17 appears to hold together the shoulder and platform of the 30S subunit. The protein is Small ribosomal subunit protein uS12 of Malacoplasma penetrans (strain HF-2) (Mycoplasma penetrans).